A 414-amino-acid polypeptide reads, in one-letter code: Cyclohex-1-ene-1-carbonyl-CoA dehydrogenase (414 aa).

The active-site Proton acceptor is the aspartate 124. The FAD site is built by alanine 157, threonine 158, serine 164, and threonine 190. Serine 164 lines the cyclohex-1-ene-1-carbonyl-CoA pocket. Residue serine 164 coordinates cyclohexa-1,5-diene-1-carbonyl-CoA. Cyclohex-1-ene-1-carbonyl-CoA-binding residues include lysine 211, arginine 275, and threonine 396. Cyclohexa-1,5-diene-1-carbonyl-CoA contacts are provided by lysine 211, arginine 275, and threonine 396. FAD-binding residues include threonine 398 and glutamine 400. Cyclohex-1-ene-1-carbonyl-CoA is bound at residue arginine 408. Arginine 408 contributes to the cyclohexa-1,5-diene-1-carbonyl-CoA binding site.

Belongs to the acyl-CoA dehydrogenase family. As to quaternary structure, homotetramer. Requires FAD as cofactor.

It catalyses the reaction cyclohex-1-ene-1-carbonyl-CoA + oxidized [electron-transfer flavoprotein] + H(+) = cyclohexa-1,5-diene-1-carbonyl-CoA + reduced [electron-transfer flavoprotein]. In terms of biological role, mediates the conversion of cyclohex-1-ene-1-carbonyl-CoA (Ch1CoA) into (E)-2-cyclohex-1,5-diene-1-carbonyl-CoA in biosynthesis of cyclohexane-1-carboxylate, a by-product produced during fermentation of benzoate and crotonate to acetate. Also able to further convert (E)-2-cyclohex-1,5-diene-1-carbonyl-CoA to benzoyl-CoA. The sequence is that of Cyclohex-1-ene-1-carbonyl-CoA dehydrogenase from Syntrophus aciditrophicus (strain SB).